The following is a 167-amino-acid chain: Gem-associated protein 6 (167 aa).

A Sm domain is found at 7 to 74; it reads KGPLEWQDYI…VQTVETMNEG (68 aa). Residues 69-167 form the AD domain; it reads ETMNEGDHRV…LIEGHLTASQ (99 aa). A phosphoserine mark is found at serine 95 and serine 166.

In terms of assembly, part of the core SMN complex that contains SMN1, GEMIN2/SIP1, DDX20/GEMIN3, GEMIN4, GEMIN5, GEMIN6, GEMIN7, GEMIN8 and STRAP/UNRIP. Part of the SMN-Sm complex that contains SMN1, GEMIN2/SIP1, DDX20/GEMIN3, GEMIN4, GEMIN5, GEMIN6, GEMIN7, GEMIN8, STRAP/UNRIP and the Sm proteins SNRPB, SNRPD1, SNRPD2, SNRPD3, SNRPE, SNRPF and SNRPG. Interacts with GEMIN7; the interaction is direct. Interacts with GEMIN8; the interaction is direct. Interacts with SNRPB, SNRPD2, SNRPD3 and SNRPE; the interaction is direct.

It is found in the nucleus. It localises to the nucleoplasm. The protein resides in the gem. The protein localises to the cytoplasm. In terms of biological role, the SMN complex catalyzes the assembly of small nuclear ribonucleoproteins (snRNPs), the building blocks of the spliceosome, and thereby plays an important role in the splicing of cellular pre-mRNAs. Most spliceosomal snRNPs contain a common set of Sm proteins SNRPB, SNRPD1, SNRPD2, SNRPD3, SNRPE, SNRPF and SNRPG that assemble in a heptameric protein ring on the Sm site of the small nuclear RNA to form the core snRNP (Sm core). In the cytosol, the Sm proteins SNRPD1, SNRPD2, SNRPE, SNRPF and SNRPG are trapped in an inactive 6S pICln-Sm complex by the chaperone CLNS1A that controls the assembly of the core snRNP. To assemble core snRNPs, the SMN complex accepts the trapped 5Sm proteins from CLNS1A forming an intermediate. Binding of snRNA inside 5Sm triggers eviction of the SMN complex, thereby allowing binding of SNRPD3 and SNRPB to complete assembly of the core snRNP. The chain is Gem-associated protein 6 (GEMIN6) from Homo sapiens (Human).